Reading from the N-terminus, the 208-residue chain is ATP-dependent Clp protease proteolytic subunit (208 aa).

The Nucleophile role is filled by Ser-106. His-131 is an active-site residue.

This sequence belongs to the peptidase S14 family. In terms of assembly, fourteen ClpP subunits assemble into 2 heptameric rings which stack back to back to give a disk-like structure with a central cavity, resembling the structure of eukaryotic proteasomes.

It localises to the cytoplasm. It catalyses the reaction Hydrolysis of proteins to small peptides in the presence of ATP and magnesium. alpha-casein is the usual test substrate. In the absence of ATP, only oligopeptides shorter than five residues are hydrolyzed (such as succinyl-Leu-Tyr-|-NHMec, and Leu-Tyr-Leu-|-Tyr-Trp, in which cleavage of the -Tyr-|-Leu- and -Tyr-|-Trp bonds also occurs).. Cleaves peptides in various proteins in a process that requires ATP hydrolysis. Has a chymotrypsin-like activity. Plays a major role in the degradation of misfolded proteins. This Caulobacter sp. (strain K31) protein is ATP-dependent Clp protease proteolytic subunit.